We begin with the raw amino-acid sequence, 286 residues long: Putative inorganic pyrophosphatase C3A12.02 (286 aa).

Arg-85 is a diphosphate binding site. Positions 122, 127, and 159 each coordinate Mg(2+).

This sequence belongs to the PPase family. Mg(2+) is required as a cofactor.

The protein localises to the cytoplasm. It carries out the reaction diphosphate + H2O = 2 phosphate + H(+). In Schizosaccharomyces pombe (strain 972 / ATCC 24843) (Fission yeast), this protein is Putative inorganic pyrophosphatase C3A12.02.